A 592-amino-acid polypeptide reads, in one-letter code: Putative amidase ARB_02965 (592 aa).

An N-terminal signal peptide occupies residues 1–21 (MKGPITFLLQLGAVYTSIASA). Residue asparagine 120 is glycosylated (N-linked (GlcNAc...) asparagine). Lysine 161 functions as the Charge relay system in the catalytic mechanism. Residue asparagine 217 is glycosylated (N-linked (GlcNAc...) asparagine). Serine 242 serves as the catalytic Charge relay system. Residues serine 242 and 263-266 (TSGS) each bind substrate. Serine 266 serves as the catalytic Acyl-ester intermediate. N-linked (GlcNAc...) asparagine glycans are attached at residues asparagine 326, asparagine 430, and asparagine 528.

Belongs to the amidase family.

The protein localises to the secreted. The sequence is that of Putative amidase ARB_02965 from Arthroderma benhamiae (strain ATCC MYA-4681 / CBS 112371) (Trichophyton mentagrophytes).